Here is a 1877-residue protein sequence, read N- to C-terminus: Protein TIC 214 (1877 aa).

A run of 6 helical transmembrane segments spans residues 18–38 (IINS…FSVG), 64–84 (FITG…HLAL), 87–107 (PHTI…WKNH), 124–144 (LSIQ…HFIL), 172–192 (VGWL…LFWI), and 221–241 (IFRI…PSPI). Disordered stretches follow at residues 246 to 313 (LKET…GKEK), 644 to 695 (DDFE…NSDR), and 774 to 795 (PEFK…QKKE). Acidic residues-rich tracts occupy residues 251 to 268 (ETEE…EIET), 281 to 304 (GSTE…DETE), and 645 to 659 (DFEE…ESTE). Residues 685-695 (TSTKDTTNSDR) show a composition bias toward basic and acidic residues.

This sequence belongs to the TIC214 family. In terms of assembly, part of the Tic complex.

It is found in the plastid. The protein localises to the chloroplast inner membrane. Involved in protein precursor import into chloroplasts. May be part of an intermediate translocation complex acting as a protein-conducting channel at the inner envelope. The polypeptide is Protein TIC 214 (Chloranthus spicatus (Chulantree)).